Here is a 392-residue protein sequence, read N- to C-terminus: 26S proteasome regulatory subunit 8 homolog (392 aa).

176-183 serves as a coordination point for ATP; sequence GPPGTGKT.

Belongs to the AAA ATPase family. As to quaternary structure, the 26S proteasome consists of a 20S proteasome core and two 19S regulatory subunits. The 20S proteasome core is composed of 28 subunits that are arranged in four stacked rings, resulting in a barrel-shaped structure. The two end rings are each formed by seven alpha subunits, and the two central rings are each formed by seven beta subunits. The catalytic chamber with the active sites is on the inside of the barrel.

The protein resides in the cytoplasm. Its subcellular location is the nucleus. Its function is as follows. Acts as a regulatory subunit of the 26S proteasome which degrades poly-ubiquitinated proteins in the cytoplasm and in the nucleus. It is essential for the regulated turnover of proteins and for the removal of misfolded proteins. The proteasome is a multicatalytic proteinase complex that is characterized by its ability to cleave peptides with Arg, Phe, Tyr, Leu, and Glu adjacent to the leaving group at neutral or slightly basic pH. The protein is 26S proteasome regulatory subunit 8 homolog (RPT6) of Encephalitozoon cuniculi (strain GB-M1) (Microsporidian parasite).